The primary structure comprises 810 residues: F-BAR domain only protein 2 (810 aa).

Residues 3–250 enclose the F-BAR domain; the sequence is MAYFVENFWG…NMANTTVESL (248 aa). The tract at residues 3-274 is mediates dimerization and binding to membranes enriched in Pi(4,5)-P2 and induces their tubulation; sequence MAYFVENFWG…PGLIEFEECD (272 aa). Positions 87 to 156 form a coiled coil; the sequence is HLDLVRKLQE…CVEQERLKKE (70 aa). Lysine 297 participates in a covalent cross-link: Glycyl lysine isopeptide (Lys-Gly) (interchain with G-Cter in SUMO2). A disordered region spans residues 301–352; it reads DAESVECPDADSLNIPDVDEEGYSIKPETNQNDTKENHFYSSSDSDSEDEEP. Phosphoserine is present on serine 312. Position 385 is a phosphothreonine (threonine 385). 3 positions are modified to phosphoserine: serine 387, serine 394, and serine 403. Residues 404–537 form a disordered region; the sequence is NEELTKSKPS…VSRGPSPVSL (134 aa). The span at 433-456 shows a compositional bias: low complexity; the sequence is PSLDSSSSSSLTSSSSARPTTPLS. A phosphoserine mark is found at serine 488, serine 493, serine 496, serine 508, serine 510, serine 511, and serine 533. Low complexity predominate over residues 502–521; that stretch reads PLARAESSSSISSSASLSAA. The tract at residues 521–810 is mediates interaction with DAB2, EPS15, EPS15R and ITSN1; sequence ANTPTVGVSR…FATGRYLADC (290 aa). Residues 542–809 form the MHD domain; it reads TLPVAVALTE…RFATGRYLAD (268 aa).

It belongs to the FCHO family. In terms of assembly, homodimer; disulfide-linked. May form homotetramer. Interacts with AP2A1. Interacts with EPS15, EPS15R, ITSN1 and ITSN2; recruit those scaffolding proteins which in turn may interact with the adaptor protein complex AP-2 at the plasma membrane. Interacts with DAB2 (via DPF motifs); mediates LDL receptor/LDLR endocytosis. Post-translationally, ubiquitinated. Mainly undergoes monoubiquitination but also polyubiquitination.

The protein resides in the membrane. The protein localises to the clathrin-coated pit. Functionally, functions in an early step of clathrin-mediated endocytosis. Has both a membrane binding/bending activity and the ability to recruit proteins essential to the formation of functional clathrin-coated pits. Has a lipid-binding activity with a preference for membranes enriched in phosphatidylserine and phosphoinositides (Pi(4,5) biphosphate) like the plasma membrane. Its membrane-bending activity might be important for the subsequent action of clathrin and adaptors in the formation of clathrin-coated vesicles. Involved in adaptor protein complex AP-2-dependent endocytosis of the transferrin receptor, it also functions in the AP-2-independent endocytosis of the LDL receptor. This chain is F-BAR domain only protein 2 (FCHO2), found in Homo sapiens (Human).